Consider the following 252-residue polypeptide: 2-succinyl-6-hydroxy-2,4-cyclohexadiene-1-carboxylate synthase (252 aa).

It belongs to the AB hydrolase superfamily. MenH family. In terms of assembly, monomer.

It catalyses the reaction 5-enolpyruvoyl-6-hydroxy-2-succinyl-cyclohex-3-ene-1-carboxylate = (1R,6R)-6-hydroxy-2-succinyl-cyclohexa-2,4-diene-1-carboxylate + pyruvate. Its pathway is quinol/quinone metabolism; 1,4-dihydroxy-2-naphthoate biosynthesis; 1,4-dihydroxy-2-naphthoate from chorismate: step 3/7. It functions in the pathway quinol/quinone metabolism; menaquinone biosynthesis. Its function is as follows. Catalyzes a proton abstraction reaction that results in 2,5-elimination of pyruvate from 2-succinyl-5-enolpyruvyl-6-hydroxy-3-cyclohexene-1-carboxylate (SEPHCHC) and the formation of 2-succinyl-6-hydroxy-2,4-cyclohexadiene-1-carboxylate (SHCHC). In Escherichia coli (strain ATCC 8739 / DSM 1576 / NBRC 3972 / NCIMB 8545 / WDCM 00012 / Crooks), this protein is 2-succinyl-6-hydroxy-2,4-cyclohexadiene-1-carboxylate synthase.